The following is a 300-amino-acid chain: Dipeptide transport system permease protein DppC (300 aa).

The Cytoplasmic segment spans residues 1 to 31 (MSQVTENKVISAPVPMTPLQEFWHYFKRNKG). Residues 32–52 (AVVGLVYVVIVLFIAIFANWI) traverse the membrane as a helical segment. At 53 to 101 (APYNPAEQFRDALLAPPAWQEGGSMAHLLGTDDVGRDVLSRLMYGARLS) the chain is on the periplasmic side. The 190-residue stretch at 98-287 (ARLSLLVGCL…LTVLAFNLMG (190 aa)) folds into the ABC transmembrane type-1 domain. The helical transmembrane segment at 102 to 122 (LLVGCLVVVLSLIMGVILGLI) threads the bilayer. Over 123–136 (AGYFGGLVDNIIMR) the chain is Cytoplasmic. The chain crosses the membrane as a helical span at residues 137–157 (VVDIMLALPSLLLALVLVAIF). Residues 158–206 (GPSIGNAALALTFVALPHYVRLTRAAVLVEVNRDYVTASRVAGAGAMRQ) lie on the Periplasmic side of the membrane. The helical transmembrane segment at 207–227 (MFINIFPNCLAPLIVQASLGF) threads the bilayer. The Cytoplasmic segment spans residues 228 to 230 (SNA). Residues 231–251 (ILDMAALGFLGMGAQPPTPEW) form a helical membrane-spanning segment. At 252–265 (GTMLSDVLQFAQSA) the chain is on the periplasmic side. Residues 266–286 (WWVVTFPGLAILLTVLAFNLM) traverse the membrane as a helical segment. At 287-300 (GDGLRDALDPKLKQ) the chain is on the cytoplasmic side.

The protein belongs to the binding-protein-dependent transport system permease family. OppBC subfamily. In terms of assembly, the complex is composed of two ATP-binding proteins (DppD and DppF), two transmembrane proteins (DppB and DppC) and a solute-binding protein (DppA).

Its subcellular location is the cell inner membrane. Functionally, part of the ABC transporter DppABCDF involved in dipeptide transport. Responsible for the translocation of the substrate across the membrane. This is Dipeptide transport system permease protein DppC (dppC) from Escherichia coli O157:H7.